Consider the following 225-residue polypeptide: Cardiotrophin-like cytokine factor 1 (225 aa).

A signal peptide spans 1 to 27 (MDLRAGDSWGMLACLCTVLWHLPAVPA). N-linked (GlcNAc...) asparagine glycosylation is present at Asn29.

This sequence belongs to the IL-6 superfamily. Forms a heteromeric complex with cardiotrophin-like cytokine CRLF1/CLF-1; the CRLF1-CLCF1 complex is a ligand for the ciliary neurotrophic factor receptor/CNTFR. The CRLF1-CLCF1 heterodimer binds SORL1 (via N-terminal ectodomain); within this complex, the interaction is mediated predominantly by the CRLF1 moiety. The tripartite signaling complex formed by CRLF1, CLCF1 and CNTFR also binds SORL1. As to expression, expressed predominantly in lymph nodes, spleen, peripheral blood lymphocytes, bone marrow, and fetal liver.

The protein resides in the secreted. Its function is as follows. In complex with CRLF1, forms a heterodimeric neurotropic cytokine that plays a crucial role during neuronal development. Also stimulates B-cells. Binds to and activates the ILST/gp130 receptor. The sequence is that of Cardiotrophin-like cytokine factor 1 (CLCF1) from Homo sapiens (Human).